The primary structure comprises 294 residues: Major pollen allergen Pha a 5.3 (294 aa).

An N-terminal signal peptide occupies residues 1–25 (MAVQKYTVALFLAMALVAGPAASYA).

Belongs to the Poa p IX/Phl p VI allergen family.

This chain is Major pollen allergen Pha a 5.3, found in Phalaris aquatica (Canary grass).